An 87-amino-acid chain; its full sequence is Large ribosomal subunit protein bL31B (87 aa).

It belongs to the bacterial ribosomal protein bL31 family. Type B subfamily. In terms of assembly, part of the 50S ribosomal subunit.

In Staphylococcus carnosus (strain TM300), this protein is Large ribosomal subunit protein bL31B.